Here is a 218-residue protein sequence, read N- to C-terminus: Large ribosomal subunit protein uL16 (218 aa).

The protein belongs to the universal ribosomal protein uL16 family. As to quaternary structure, component of the large ribosomal subunit. Mature ribosomes consist of a small (40S) and a large (60S) subunit. The 40S subunit contains about 33 different proteins and 1 molecule of RNA (18S). The 60S subunit contains about 49 different proteins and 3 molecules of RNA (28S, 5.8S and 5S).

This is Large ribosomal subunit protein uL16 (RpL10) from Drosophila melanogaster (Fruit fly).